We begin with the raw amino-acid sequence, 364 residues long: Histidinol-phosphate aminotransferase (364 aa).

Lys-226 bears the N6-(pyridoxal phosphate)lysine mark.

This sequence belongs to the class-II pyridoxal-phosphate-dependent aminotransferase family. Histidinol-phosphate aminotransferase subfamily. Homodimer. Requires pyridoxal 5'-phosphate as cofactor.

The enzyme catalyses L-histidinol phosphate + 2-oxoglutarate = 3-(imidazol-4-yl)-2-oxopropyl phosphate + L-glutamate. Its pathway is amino-acid biosynthesis; L-histidine biosynthesis; L-histidine from 5-phospho-alpha-D-ribose 1-diphosphate: step 7/9. The protein is Histidinol-phosphate aminotransferase of Campylobacter jejuni subsp. jejuni serotype O:2 (strain ATCC 700819 / NCTC 11168).